The primary structure comprises 577 residues: Arginine--tRNA ligase (577 aa).

The short motif at 122–132 (PNVAKEMHVGH) is the 'HIGH' region element.

It belongs to the class-I aminoacyl-tRNA synthetase family. Monomer.

Its subcellular location is the cytoplasm. It catalyses the reaction tRNA(Arg) + L-arginine + ATP = L-arginyl-tRNA(Arg) + AMP + diphosphate. In Edwardsiella ictaluri (strain 93-146), this protein is Arginine--tRNA ligase.